A 321-amino-acid chain; its full sequence is MATH domain and coiled-coil domain-containing protein At3g58410 (321 aa).

Positions Gly-6–Val-128 constitute an MATH domain. The stretch at Lys-255–Ala-310 forms a coiled coil.

The protein is MATH domain and coiled-coil domain-containing protein At3g58410 of Arabidopsis thaliana (Mouse-ear cress).